We begin with the raw amino-acid sequence, 183 residues long: Thymidine kinase (183 aa).

11–18 contributes to the ATP binding site; it reads GPMFSGKT. Glutamate 89 functions as the Proton acceptor in the catalytic mechanism. Substrate is bound at residue phenylalanine 119. Residues cysteine 144 and cysteine 147 each coordinate Zn(2+). Position 163–167 (163–167) interacts with substrate; that stretch reads VMDIG. 2 residues coordinate Zn(2+): cysteine 176 and cysteine 179.

This sequence belongs to the thymidine kinase family.

It carries out the reaction thymidine + ATP = dTMP + ADP + H(+). The polypeptide is Thymidine kinase (TK) (Vertebrata (FPV)).